A 146-amino-acid chain; its full sequence is Hemoglobin subunit beta (146 aa).

Threonine 1 carries the post-translational modification Blocked amino end (Thr). The Globin domain maps to 2-146 (HWTAEERHYI…VAHALTLQYH (145 aa)). 2 residues coordinate heme b: histidine 63 and histidine 92.

Belongs to the globin family. In terms of assembly, heterotetramer of two alpha chains and two beta chains. Red blood cells.

Involved in oxygen transport from the lung to the various peripheral tissues. This Caretta caretta (Loggerhead sea turtle) protein is Hemoglobin subunit beta (HBB).